The sequence spans 310 residues: Transcription factor RAX3 (310 aa).

2 consecutive HTH myb-type domains span residues 9–62 and 63–117; these read KANV…LNYL and RPNI…KKKL. 2 DNA-binding regions (H-T-H motif) span residues 38–62 and 90–113; these read WIALPQKIGLKRCGKSCRLRWLNYL and WSIIAAQLPGRTDNDIKNYWNTRL.

Ubiquitous.

It localises to the nucleus. In terms of biological role, transcription activator. Positively regulates axillary meristems (AMs) formation and development, especially during inflorescence. The polypeptide is Transcription factor RAX3 (RAX3) (Arabidopsis thaliana (Mouse-ear cress)).